The chain runs to 345 residues: MKQLKRKRKSNFSVQETQTLLKEITKRKEVIFSKQLNTTINVMKRMAWEEIAQCVNAVGEGEQRTGTEVKRRYLDWRALMKRKKMKANIKLVGSGFPLPTSDLDDSLTEEIDEKIGFRSDTNFDWQNVADFRDAGGSLTEVKVEEEERDPQSPEFEIEEEEEMLSSVIPDSRRENELPDFPHIDEFFTLNSTPSRSAYDEPHLLVNIEKQKLELEKRRLDIEAERLQVEKERLQIEKERLRHLDMEHERLQLEKERLQIEREKLRLQIVNSEKPSLESELGQGEKSIHQPQDIETEKLKLERERLQLEKDRLQFLKFESEKLQIEKERLQVEKERLRIQKEGHLQ.

One can recognise a Myb-like domain in the interval 4-77 (LKRKRKSNFS…EVKRRYLDWR (74 aa)). Lys-9 participates in a covalent cross-link: Glycyl lysine isopeptide (Lys-Gly) (interchain with G-Cter in SUMO2). A Phosphoserine modification is found at Ser-106. Glycyl lysine isopeptide (Lys-Gly) (interchain with G-Cter in SUMO2) cross-links involve residues Lys-114 and Lys-142. Residues 141–160 (VKVEEEERDPQSPEFEIEEE) form a disordered region. The residue at position 188 (Thr-188) is a Phosphothreonine. Residues 203-345 (LLVNIEKQKL…LRIQKEGHLQ (143 aa)) adopt a coiled-coil conformation. Residues Lys-237, Lys-254, and Lys-273 each participate in a glycyl lysine isopeptide (Lys-Gly) (interchain with G-Cter in SUMO2) cross-link.

The protein is Myb/SANT-like DNA-binding domain-containing protein 4 (MSANTD4) of Bos taurus (Bovine).